The following is a 193-amino-acid chain: uncharacterized protein (193 aa).

Transmembrane regions (helical) follow at residues 5-25 (LILLIVVLFLTPYLIALFIIF), 63-83 (IFILIVEIIALCSGFYILINI), and 90-110 (ILTFSLIFLFIAIIYDKLTPA).

It is found in the cell membrane. This is an uncharacterized protein from Methanocaldococcus jannaschii (strain ATCC 43067 / DSM 2661 / JAL-1 / JCM 10045 / NBRC 100440) (Methanococcus jannaschii).